The primary structure comprises 145 residues: D-aminoacyl-tRNA deacylase (145 aa).

Residues 137–138 (GP) carry the Gly-cisPro motif, important for rejection of L-amino acids motif.

It belongs to the DTD family. In terms of assembly, homodimer.

It localises to the cytoplasm. The catalysed reaction is glycyl-tRNA(Ala) + H2O = tRNA(Ala) + glycine + H(+). It catalyses the reaction a D-aminoacyl-tRNA + H2O = a tRNA + a D-alpha-amino acid + H(+). An aminoacyl-tRNA editing enzyme that deacylates mischarged D-aminoacyl-tRNAs. Also deacylates mischarged glycyl-tRNA(Ala), protecting cells against glycine mischarging by AlaRS. Acts via tRNA-based rather than protein-based catalysis; rejects L-amino acids rather than detecting D-amino acids in the active site. By recycling D-aminoacyl-tRNA to D-amino acids and free tRNA molecules, this enzyme counteracts the toxicity associated with the formation of D-aminoacyl-tRNA entities in vivo and helps enforce protein L-homochirality. The polypeptide is D-aminoacyl-tRNA deacylase (Rhodopirellula baltica (strain DSM 10527 / NCIMB 13988 / SH1)).